The following is a 175-amino-acid chain: Disulfide bond formation protein B (175 aa).

The Cytoplasmic segment spans residues 1-13 (MVSNWLDAAPRRV). A helical membrane pass occupies residues 14-30 (LALISAACIAMLAFGMY). Residues 31–48 (LQHVVGLEPCPMCIVQRY) lie on the Periplasmic side of the membrane. The cysteines at positions 40 and 43 are disulfide-linked. A helical membrane pass occupies residues 49 to 65 (ALIGVAVFTGLGSLRGG). At 66 to 70 (RGWWM) the chain is on the cytoplasmic side. A helical transmembrane segment spans residues 71–88 (TWGVLALLLSGFGAFVAA). The Periplasmic portion of the chain corresponds to 89-144 (RQSWLQWYPPEIATCGRDFYGMIENFPISRAIPMIFRGSGDCAAIDWTFLGGSIAN). A disulfide bridge connects residues cysteine 103 and cysteine 130. The helical transmembrane segment at 145-163 (WSFVCFVVMALVLLVMLLR) threads the bilayer. Topologically, residues 164–175 (APRPARGGFSAA) are cytoplasmic.

This sequence belongs to the DsbB family.

The protein localises to the cell inner membrane. In terms of biological role, required for disulfide bond formation in some periplasmic proteins. Acts by oxidizing the DsbA protein. The sequence is that of Disulfide bond formation protein B from Paracidovorax citrulli (strain AAC00-1) (Acidovorax citrulli).